The primary structure comprises 140 residues: CBS domain-containing protein YhcV (140 aa).

2 consecutive CBS domains span residues 8-64 and 72-127; these read MTTQ…GRDG and MSTE…NESA.

The protein is CBS domain-containing protein YhcV (yhcV) of Bacillus subtilis (strain 168).